The chain runs to 244 residues: Tetraspanin-2A (244 aa).

At 1 to 22 (MGIGYGASDEQLEKQIGCVKYT) the chain is on the cytoplasmic side. The helical transmembrane segment at 23–43 (LFCFNIVAWMISTALFALTVW) threads the bilayer. Residues 44–61 (LRAEPGFNDWLRILEAQS) are Extracellular-facing. A helical membrane pass occupies residues 62-82 (FYIGVYVLIGISIVMMAVSFL). Residues 83-91 (GCLSALMEN) lie on the Cytoplasmic side of the membrane. A helical transmembrane segment spans residues 92 to 112 (TLALFVFVGTQVFGFIAIVAG). At 113–206 (SAVLLQFSTI…TWFFEGKTGW (94 aa)) the chain is on the extracellular side. A helical membrane pass occupies residues 207 to 227 (IVALAMTLGLLNVICAVMSFV). At 228 to 244 (LVQAVKKEEEQASNYRR) the chain is on the cytoplasmic side.

It belongs to the tetraspanin (TM4SF) family. Forms a complex with Ssk and mesh.

The protein localises to the apicolateral cell membrane. It localises to the cell junction. The protein resides in the septate junction. In terms of biological role, required for assembly of smooth septate junctions (sSJs), together with Ssk and mesh. Important for barrier function of the midgut epithelium. This Drosophila melanogaster (Fruit fly) protein is Tetraspanin-2A.